The sequence spans 291 residues: 3-hydroxy-5-phosphonooxypentane-2,4-dione thiolase (291 aa).

Lysine 203 serves as the catalytic Schiff-base intermediate with substrate.

This sequence belongs to the DeoC/FbaB aldolase family. Homodecamer.

It localises to the cytoplasm. The catalysed reaction is dihydroxyacetone phosphate + acetyl-CoA = 3-hydroxy-2,4-dioxopentyl phosphate + CoA. Functionally, involved in the degradation of phospho-AI-2, thereby terminating induction of the lsr operon and closing the AI-2 signaling cycle. Catalyzes the transfer of an acetyl moiety from 3-hydroxy-5-phosphonooxypentane-2,4-dione to CoA to form glycerone phosphate and acetyl-CoA. This Yersinia enterocolitica serotype O:8 / biotype 1B (strain NCTC 13174 / 8081) protein is 3-hydroxy-5-phosphonooxypentane-2,4-dione thiolase.